The following is a 110-amino-acid chain: Holo-[acyl-carrier-protein] synthase (110 aa).

Mg(2+)-binding residues include Asp-8 and Glu-54.

This sequence belongs to the P-Pant transferase superfamily. AcpS family. Mg(2+) is required as a cofactor.

The protein localises to the cytoplasm. The enzyme catalyses apo-[ACP] + CoA = holo-[ACP] + adenosine 3',5'-bisphosphate + H(+). Its function is as follows. Transfers the 4'-phosphopantetheine moiety from coenzyme A to a Ser of acyl-carrier-protein. This chain is Holo-[acyl-carrier-protein] synthase, found in Mycoplasma mycoides subsp. mycoides SC (strain CCUG 32753 / NCTC 10114 / PG1).